The chain runs to 28 residues: Potassium channel toxin alpha-KTx 9.10 (28 aa).

Disulfide bonds link Cys3–Cys19, Cys6–Cys24, and Cys10–Cys26.

It belongs to the short scorpion toxin superfamily. Potassium channel inhibitor family. Alpha-KTx 09 subfamily. Expressed by the venom gland.

It is found in the secreted. Blocks Shaker potassium channels. This Mesobuthus eupeus (Lesser Asian scorpion) protein is Potassium channel toxin alpha-KTx 9.10.